We begin with the raw amino-acid sequence, 130 residues long: MAENQYYGTGRRKSSTARVFIKAGSGKIVINQRSLEQYFGRPTARMVVRQPLELVEMTEKLDLYITVNGGGISGQAGAIRHGITRALMQYDETLRAELRKAGFVTRDARKVERKKVGLHKARKRPQYSKR.

Belongs to the universal ribosomal protein uS9 family.

The polypeptide is Small ribosomal subunit protein uS9 (Aeromonas salmonicida (strain A449)).